A 643-amino-acid polypeptide reads, in one-letter code: Fructose-1,6-bisphosphatase class 3 (643 aa).

Belongs to the FBPase class 3 family. Requires Mn(2+) as cofactor.

The enzyme catalyses beta-D-fructose 1,6-bisphosphate + H2O = beta-D-fructose 6-phosphate + phosphate. The protein operates within carbohydrate biosynthesis; gluconeogenesis. The chain is Fructose-1,6-bisphosphatase class 3 from Lacticaseibacillus paracasei (strain ATCC 334 / BCRC 17002 / CCUG 31169 / CIP 107868 / KCTC 3260 / NRRL B-441) (Lactobacillus paracasei).